Here is a 94-residue protein sequence, read N- to C-terminus: Large ribosomal subunit protein bL25 (94 aa).

Belongs to the bacterial ribosomal protein bL25 family. Part of the 50S ribosomal subunit; part of the 5S rRNA/L5/L18/L25 subcomplex. Contacts the 5S rRNA. Binds to the 5S rRNA independently of L5 and L18.

Functionally, this is one of the proteins that binds to the 5S RNA in the ribosome where it forms part of the central protuberance. The chain is Large ribosomal subunit protein bL25 from Pectobacterium carotovorum subsp. carotovorum (strain PC1).